Reading from the N-terminus, the 590-residue chain is uncharacterized protein (590 aa).

At 1–68 (MKFSKPKFSM…SQRVWGPWNY (68 aa)) the chain is on the cytoplasmic side. Residues 69–89 (VAFWLADSVNVNTWMIAGTAV) traverse the membrane as a helical segment. At 90–94 (ESGLS) the chain is on the extracellular side. The chain crosses the membrane as a helical span at residues 95-115 (WWEAWITVWVGYTIAAFILTI). Residues 116–124 (AGRAGAVYH) are Cytoplasmic-facing. A helical transmembrane segment spans residues 125 to 145 (ISFPVLSRSSFGIWGSLWPIL). The Extracellular portion of the chain corresponds to 146–149 (NRAV). Residues 150 to 170 (MACVWYGVQAWIGGECVTLMI) traverse the membrane as a helical segment. Topologically, residues 171–194 (RSIWPSFSHIPNTMAKSGTETYQW) are cytoplasmic. Residues 195 to 215 (VGFFIFWLISNVAIWFPVYQI) form a helical membrane-spanning segment. At 216–218 (RHL) the chain is on the extracellular side. The helical transmembrane segment at 219-239 (FTAKSFLAPPAAIAFLIWALV) threads the bilayer. The Cytoplasmic portion of the chain corresponds to 240 to 258 (KAHGAGDAIHAKTQLSTWN). A helical transmembrane segment spans residues 259–279 (HGWAVTAGIISCLDNFATLIV). Residues 280 to 298 (NNPDFTRFATTPNAPIFPQ) are Extracellular-facing. The helical transmembrane segment at 299-319 (LITIPMGFGITTLIGVLVGSA) threads the bilayer. The Cytoplasmic portion of the chain corresponds to 320 to 390 (SKSIYGENIW…LCPMFINIRR (71 aa)). The helical transmembrane segment at 391 to 411 (GGYIASIIGICMCPWNLLSSS) threads the bilayer. The Extracellular portion of the chain corresponds to 412-418 (NSFANSL). Residues 419–439 (SAYAVFLSSFAGILIADYFVI) form a helical membrane-spanning segment. At 440–467 (RKGYLKVDALYTINPNEPYWFTYGINLR) the chain is on the cytoplasmic side. The helical transmembrane segment at 468–488 (AFASYICGLLINVVGLAGAVG) threads the bilayer. At 489 to 500 (DKVPKAALTMNN) the chain is on the extracellular side. A helical transmembrane segment spans residues 501-521 (IAYLLGIVTSFLSHLIICKIF). Residues 522 to 590 (PVTACGEKFL…GIDIKESSVF (69 aa)) lie on the Cytoplasmic side of the membrane. Positions 566–590 (VSYDSKEKSDDGKSGGIDIKESSVF) are disordered.

Belongs to the purine-cytosine permease (2.A.39) family.

The protein localises to the cytoplasm. It is found in the nucleus. It localises to the membrane. This is an uncharacterized protein from Schizosaccharomyces pombe (strain 972 / ATCC 24843) (Fission yeast).